Reading from the N-terminus, the 574-residue chain is Alpha-farnesene synthase (574 aa).

Mn(2+)-binding residues include aspartate 326, aspartate 330, and glutamate 478. Positions aspartate 326 to aspartate 330 match the DDXXD motif motif.

The protein belongs to the terpene synthase family. Tpsd subfamily. Mn(2+) serves as cofactor.

Its subcellular location is the cytoplasm. It carries out the reaction (2E,6E)-farnesyl diphosphate = (3E,6E)-alpha-farnesene + diphosphate. It functions in the pathway terpene metabolism; oleoresin biosynthesis. Involved in sesquiterpene (C15) biosynthesis. The major product is alpha-farnesene. In Pinus taeda (Loblolly pine), this protein is Alpha-farnesene synthase (PT5).